The following is a 403-amino-acid chain: GTPase Obg (403 aa).

Positions 1-159 constitute an Obg domain; sequence MKFIDESLIR…RDLLLELMLL (159 aa). An OBG-type G domain is found at 160–333; it reads ADVGMLGFPN…LCRDIMDFII (174 aa). Residues 166–173, 191–195, 213–216, 283–286, and 314–316 contribute to the GTP site; these read GFPNAGKS, FTTLV, DIPG, NKID, and SAA. Positions 173 and 193 each coordinate Mg(2+). The segment at 364–403 is disordered; the sequence is YQFDDDEDWDDDWTEEDDDEDWDDDWSEEDDEGIEFIYKP. Residues 365 to 397 are compositionally biased toward acidic residues; that stretch reads QFDDDEDWDDDWTEEDDDEDWDDDWSEEDDEGI.

It belongs to the TRAFAC class OBG-HflX-like GTPase superfamily. OBG GTPase family. As to quaternary structure, monomer. Mg(2+) is required as a cofactor.

It is found in the cytoplasm. In terms of biological role, an essential GTPase which binds GTP, GDP and possibly (p)ppGpp with moderate affinity, with high nucleotide exchange rates and a fairly low GTP hydrolysis rate. Plays a role in control of the cell cycle, stress response, ribosome biogenesis and in those bacteria that undergo differentiation, in morphogenesis control. In Haemophilus influenzae (strain PittGG), this protein is GTPase Obg.